Reading from the N-terminus, the 393-residue chain is Phosphoglycerate kinase (393 aa).

Substrate is bound by residues D21–N23, R37, H60–R63, R119, and R152. Residues K202, E323, and G349–T352 each bind ATP.

The protein belongs to the phosphoglycerate kinase family. As to quaternary structure, monomer.

It is found in the cytoplasm. The catalysed reaction is (2R)-3-phosphoglycerate + ATP = (2R)-3-phospho-glyceroyl phosphate + ADP. It functions in the pathway carbohydrate degradation; glycolysis; pyruvate from D-glyceraldehyde 3-phosphate: step 2/5. This chain is Phosphoglycerate kinase, found in Desulforudis audaxviator (strain MP104C).